The chain runs to 1683 residues: ABC transporter 7 (1683 aa).

A helical transmembrane segment spans residues 24–44 (DYLRILLPAVVIGLSVLNLGF). The disordered stretch occupies residues 53-93 (RSKSPSTHAYAPVSNGDNSRPGAHRTDISPDDDAIAQDDED). A compositionally biased stretch (acidic residues) spans 81–93 (SPDDDAIAQDDED). 4 helical membrane passes run 127–147 (LSVVVEELAIAGLVAVYVIAL), 157–177 (TLTGTIIGLTTWVYVLVLATL), 190–210 (HLWNHTAAIYSCQWLFLIGIF), and 221–241 (LAQILVIVEFALTSLLFFMAI). N-linked (GlcNAc...) asparagine glycosylation occurs at N247. The next 2 helical transmembrane spans lie at 336-356 (GWAVMSGMFTFAPTMLLKAIL) and 368-388 (SVVWLYVILLPVTDIIRSLGD). An ABC transmembrane type-1 1 domain is found at 338–664 (AVMSGMFTFA…LGDMLAHVQE (327 aa)). Positions 451–473 (GDNDESEDGKDGDKDKEDSSDEQ) are disordered. The N-linked (GlcNAc...) asparagine glycan is linked to N489. 2 helical membrane-spanning segments follow: residues 496–516 (YLHFLFASAPTQLLVSVVLLY) and 518–538 (VLGMSAIPGFVVMVLLLPVNI). The N-linked (GlcNAc...) asparagine glycan is linked to N545. 2 consecutive transmembrane segments (helical) span residues 602-622 (VWACAVAVWNTVPLLITFFSF) and 632-648 (PLHPSIAFTSISLFMLL). Positions 700–949 (IALKDAAFIW…GALGEEIAQK (250 aa)) constitute an ABC transporter 1 domain. Residue 742–749 (GPTGSGKT) coordinates ATP. Positions 952-998 (SETPNISRIPSRVPSSVGEGSGNTLLDTDGDDHLSKPKNAKKAKKAE) are disordered. An N-linked (GlcNAc...) asparagine glycan is attached at N956. The helical transmembrane segment at 1016 to 1036 (LYLASMGSWWFWVVAGCIFIS) threads the bilayer. An ABC transmembrane type-1 2 domain is found at 1028–1351 (VVAGCIFISQ…NILWLVRLYS (324 aa)). N-linked (GlcNAc...) asparagine glycosylation is present at N1097. 3 helical membrane passes run 1111 to 1131 (AQYYLVVLAIIGLAGSLTAFL), 1182 to 1202 (VDQEVAPIAIGILSCALGITV), and 1204 to 1224 (VVLIASITPGFLIAAVFITIA). The N-linked (GlcNAc...) asparagine glycan is linked to N1277. The next 2 helical transmembrane spans lie at 1304–1324 (LLGDFVSFFAGVFVILSIGVI) and 1327–1347 (GWAGISLSYAIGFAENILWLV). The ABC transporter 2 domain maps to 1392–1649 (VEFINYTTSY…GEGGSFKSMC (258 aa)). N-linked (GlcNAc...) asparagine glycosylation is found at N1396 and N1411. 1426–1433 (GRTGAGKS) contacts ATP. N-linked (GlcNAc...) asparagine glycans are attached at residues N1541 and N1552.

This sequence belongs to the ABC transporter superfamily.

The protein localises to the membrane. In terms of biological role, ABC transporter; part of the gene cluster that mediates the biosynthesis of pyriculol and pyriculariol, two heptaketides that induce lesion formation upon application on rice leaves but are dispensable for pathogenicity. With the MFS transporter MFS1, is most likely responsible for pyriculol and pyriculariol secretion and thereby may contribute to intrinsic resistance. The protein is ABC transporter 7 of Pyricularia oryzae (strain 70-15 / ATCC MYA-4617 / FGSC 8958) (Rice blast fungus).